The following is a 188-amino-acid chain: CASP-like protein 4B1 (188 aa).

Residues methionine 1–isoleucine 34 are disordered. Over methionine 1–lysine 46 the chain is Cytoplasmic. Residues glutamate 24 to isoleucine 34 are compositionally biased toward polar residues. Residues alanine 47 to valine 67 form a helical membrane-spanning segment. Topologically, residues serine 68–arginine 84 are extracellular. Residues tyrosine 85–phenylalanine 105 form a helical membrane-spanning segment. Residues serine 106–aspartate 124 are Cytoplasmic-facing. A helical transmembrane segment spans residues glutamine 125–phenylalanine 145. Topologically, residues arginine 146 to serine 156 are extracellular. A helical membrane pass occupies residues alanine 157–phenylalanine 177. Topologically, residues serine 178–isoleucine 188 are cytoplasmic.

This sequence belongs to the Casparian strip membrane proteins (CASP) family. In terms of assembly, homodimer and heterodimers.

Its subcellular location is the cell membrane. This chain is CASP-like protein 4B1, found in Arabidopsis thaliana (Mouse-ear cress).